We begin with the raw amino-acid sequence, 324 residues long: uncharacterized protein (324 aa).

A compositionally biased stretch (polar residues) spans 1 to 11 (MNTNINVNGSN). 3 disordered regions span residues 1–77 (MNTN…YSYS), 132–194 (NNHY…NNNN), and 272–324 (DENI…DNDS). Low complexity predominate over residues 21–64 (NENNNNNNGRNNNTNNNNNGRYNNNNNNNNNNNNNNYNLNMNST). Over residues 279–324 (SNNNNNNNNNNNNSYNVNICRNNSNFNVNENNGGDNNNDNNNDNDS) the composition is skewed to low complexity.

This is an uncharacterized protein from Dictyostelium discoideum (Social amoeba).